The chain runs to 393 residues: Probable acetyl-CoA acyltransferase (393 aa).

Cys-88 serves as the catalytic Acyl-thioester intermediate. Catalysis depends on proton acceptor residues His-349 and Cys-378.

It belongs to the thiolase-like superfamily. Thiolase family.

The protein localises to the cytoplasm. The enzyme catalyses 2 acetyl-CoA = acetoacetyl-CoA + CoA. The chain is Probable acetyl-CoA acyltransferase from Staphylococcus aureus (strain NCTC 8325 / PS 47).